The sequence spans 937 residues: Coiled-coil domain-containing protein 39 (937 aa).

4 coiled-coil regions span residues 16 to 137 (AIPV…CQMN), 165 to 339 (QQDD…KKDI), 365 to 615 (EKTL…SQIR), and 664 to 816 (VIKA…LKQT). The segment at 866-937 (LPTARGPSSR…NIPKEKKLSK (72 aa)) is disordered. A compositionally biased stretch (low complexity) spans 873–887 (SSRSSSQSSSLSSFR). S888 and S896 each carry phosphoserine. Residues 915-928 (NDSSRSASSGSNSN) show a composition bias toward low complexity.

It belongs to the CCDC39 family. Strongly expressed in tissues rich in ciliated cells. Expressed in olfactory and vomeronasal sensory neurons and the respiratory epithelium. Expressed in node cells carrying motile cilia, in upper and lower airways, and in ependymal and choroid plexus cells.

It is found in the cytoplasm. Its subcellular location is the cytoskeleton. It localises to the cilium axoneme. In terms of biological role, required for assembly of dynein regulatory complex (DRC) and inner dynein arm (IDA) complexes, which are responsible for ciliary beat regulation, thereby playing a central role in motility in cilia and flagella. Probably acts together with CCDC40 to form a molecular ruler that determines the 96 nanometer (nm) repeat length and arrangements of components in cilia and flagella. Not required for outer dynein arm complexes assembly. The polypeptide is Coiled-coil domain-containing protein 39 (Mus musculus (Mouse)).